A 218-amino-acid polypeptide reads, in one-letter code: Dual specificity protein phosphatase TpbA (218 aa).

The N-terminal stretch at methionine 1–alanine 28 is a signal peptide. The Tyrosine-protein phosphatase domain maps to aspartate 44–leucine 188. Aspartate 105 serves as the catalytic Proton donor/acceptor. The active-site Phosphocysteine intermediate is cysteine 132.

This sequence belongs to the protein-tyrosine phosphatase family.

It localises to the periplasm. It carries out the reaction O-phospho-L-tyrosyl-[protein] + H2O = L-tyrosyl-[protein] + phosphate. The enzyme catalyses O-phospho-L-threonyl-[protein] + H2O = L-threonyl-[protein] + phosphate. The catalysed reaction is O-phospho-L-seryl-[protein] + H2O = L-seryl-[protein] + phosphate. In terms of biological role, phosphatase that regulates diverse phenotypes in P.aeruginosa via regulation of the concentration of cellular c-di-GMP. Acts by dephosphorylating the membrane-anchored diguanylate cyclase TpbB at tyrosine and serine/threonine sites, leading to inactivation of TpbB and reduced c-di-GMP production. In vitro shows phosphatase activity toward p-nitrophenyl phosphate (pNPP) and tyrosine phosphopeptides. Can efficiently dephosphorylate two phosphorylated peptides derived from the periplasmic domain of TpbB, with a strong preference for Tyr-48 over Tyr-62. This chain is Dual specificity protein phosphatase TpbA, found in Pseudomonas aeruginosa (strain ATCC 15692 / DSM 22644 / CIP 104116 / JCM 14847 / LMG 12228 / 1C / PRS 101 / PAO1).